The chain runs to 192 residues: Orotate phosphoribosyltransferase (192 aa).

5-phospho-alpha-D-ribose 1-diphosphate is bound by residues Arg-84, Lys-88, and 110 to 118 (DDVLTTGNS). Orotate-binding residues include Thr-114 and Arg-142.

Belongs to the purine/pyrimidine phosphoribosyltransferase family. PyrE subfamily. Homodimer. Requires Mg(2+) as cofactor.

It carries out the reaction orotidine 5'-phosphate + diphosphate = orotate + 5-phospho-alpha-D-ribose 1-diphosphate. The protein operates within pyrimidine metabolism; UMP biosynthesis via de novo pathway; UMP from orotate: step 1/2. Functionally, catalyzes the transfer of a ribosyl phosphate group from 5-phosphoribose 1-diphosphate to orotate, leading to the formation of orotidine monophosphate (OMP). This chain is Orotate phosphoribosyltransferase, found in Pyrobaculum calidifontis (strain DSM 21063 / JCM 11548 / VA1).